The sequence spans 425 residues: UDP-N-acetylglucosamine 1-carboxyvinyltransferase (425 aa).

Phosphoenolpyruvate is bound at residue 22 to 23; that stretch reads KN. R98 provides a ligand contact to UDP-N-acetyl-alpha-D-glucosamine. The active-site Proton donor is the C122. Residue C122 is modified to 2-(S-cysteinyl)pyruvic acid O-phosphothioketal. Residues 127–131, D313, and I335 each bind UDP-N-acetyl-alpha-D-glucosamine; that span reads RPVDQ.

Belongs to the EPSP synthase family. MurA subfamily.

Its subcellular location is the cytoplasm. It catalyses the reaction phosphoenolpyruvate + UDP-N-acetyl-alpha-D-glucosamine = UDP-N-acetyl-3-O-(1-carboxyvinyl)-alpha-D-glucosamine + phosphate. It functions in the pathway cell wall biogenesis; peptidoglycan biosynthesis. In terms of biological role, cell wall formation. Adds enolpyruvyl to UDP-N-acetylglucosamine. This Xylella fastidiosa (strain M23) protein is UDP-N-acetylglucosamine 1-carboxyvinyltransferase.